We begin with the raw amino-acid sequence, 351 residues long: Thiamine-phosphate synthase (351 aa).

The unknown stretch occupies residues 1–128 (MLNSNTKDHE…SKIASEIRYE (128 aa)). Positions 129 to 351 (IYTVEIDLLS…MILKELSHEN (223 aa)) are thiamine-phosphate synthase. Residues 180-184 (QHRFK) and Asn-212 contribute to the 4-amino-2-methyl-5-(diphosphooxymethyl)pyrimidine site. Mg(2+) is bound by residues Asp-213 and Asp-232. Ser-251 lines the 4-amino-2-methyl-5-(diphosphooxymethyl)pyrimidine pocket. 277 to 279 (TTT) is a binding site for 2-[(2R,5Z)-2-carboxy-4-methylthiazol-5(2H)-ylidene]ethyl phosphate. Lys-280 is a binding site for 4-amino-2-methyl-5-(diphosphooxymethyl)pyrimidine. Gly-307 lines the 2-[(2R,5Z)-2-carboxy-4-methylthiazol-5(2H)-ylidene]ethyl phosphate pocket.

The protein belongs to the thiamine-phosphate synthase family. Mg(2+) is required as a cofactor.

The catalysed reaction is 2-[(2R,5Z)-2-carboxy-4-methylthiazol-5(2H)-ylidene]ethyl phosphate + 4-amino-2-methyl-5-(diphosphooxymethyl)pyrimidine + 2 H(+) = thiamine phosphate + CO2 + diphosphate. The enzyme catalyses 2-(2-carboxy-4-methylthiazol-5-yl)ethyl phosphate + 4-amino-2-methyl-5-(diphosphooxymethyl)pyrimidine + 2 H(+) = thiamine phosphate + CO2 + diphosphate. It carries out the reaction 4-methyl-5-(2-phosphooxyethyl)-thiazole + 4-amino-2-methyl-5-(diphosphooxymethyl)pyrimidine + H(+) = thiamine phosphate + diphosphate. The protein operates within cofactor biosynthesis; thiamine diphosphate biosynthesis; thiamine phosphate from 4-amino-2-methyl-5-diphosphomethylpyrimidine and 4-methyl-5-(2-phosphoethyl)-thiazole: step 1/1. In terms of biological role, condenses 4-methyl-5-(beta-hydroxyethyl)thiazole monophosphate (THZ-P) and 2-methyl-4-amino-5-hydroxymethyl pyrimidine pyrophosphate (HMP-PP) to form thiamine monophosphate (TMP). This chain is Thiamine-phosphate synthase, found in Prochlorococcus marinus (strain AS9601).